A 145-amino-acid polypeptide reads, in one-letter code: Large ribosomal subunit protein uL13 (145 aa).

The protein belongs to the universal ribosomal protein uL13 family. As to quaternary structure, part of the 50S ribosomal subunit. Binds to Obg (AC P20964).

In terms of biological role, this protein is one of the early assembly proteins of the 50S ribosomal subunit, although it is not seen to bind rRNA by itself. It is important during the early stages of 50S assembly. This Bacillus subtilis (strain 168) protein is Large ribosomal subunit protein uL13.